The following is a 336-amino-acid chain: Glycerol-3-phosphate dehydrogenase [NAD(P)+] (336 aa).

S14, W15, R35, R36, and K109 together coordinate NADPH. 2 residues coordinate sn-glycerol 3-phosphate: K109 and G139. A143 lines the NADPH pocket. Sn-glycerol 3-phosphate-binding residues include K194, D247, S257, R258, and N259. The active-site Proton acceptor is the K194. Residue R258 coordinates NADPH. E284 is an NADPH binding site.

It belongs to the NAD-dependent glycerol-3-phosphate dehydrogenase family.

It localises to the cytoplasm. The enzyme catalyses sn-glycerol 3-phosphate + NAD(+) = dihydroxyacetone phosphate + NADH + H(+). It carries out the reaction sn-glycerol 3-phosphate + NADP(+) = dihydroxyacetone phosphate + NADPH + H(+). The protein operates within membrane lipid metabolism; glycerophospholipid metabolism. Its function is as follows. Catalyzes the reduction of the glycolytic intermediate dihydroxyacetone phosphate (DHAP) to sn-glycerol 3-phosphate (G3P), the key precursor for phospholipid synthesis. This chain is Glycerol-3-phosphate dehydrogenase [NAD(P)+], found in Streptomyces griseus subsp. griseus (strain JCM 4626 / CBS 651.72 / NBRC 13350 / KCC S-0626 / ISP 5235).